Reading from the N-terminus, the 613-residue chain is Immunoglobulin superfamily member 8 (613 aa).

An N-terminal signal peptide occupies residues 1 to 27 (MGALRPTLLPPSLPLLLLLMLGMGCWA). Ig-like C2-type domains are found at residues 28-149 (REVL…LRVL), 162-286 (PRGR…WAQI), 303-424 (SQLA…EAAS), and 431-560 (PVHV…WYQA). The Extracellular portion of the chain corresponds to 28–579 (REVLVPEGPL…VYPYMHALDT (552 aa)). C49 and C127 are disulfide-bonded. Residue N50 is glycosylated (N-linked (GlcNAc...) asparagine). Residues 155–174 (VSAAPPGPRGRQAPTSPPRM) form a disordered region. C186 and C270 are joined by a disulfide. Residues 274–276 (EWI) carry the EWI motif motif. Disulfide bonds link C326–C406 and C462–C544. Residues N327 and N463 are each glycosylated (N-linked (GlcNAc...) asparagine). Residue S518 is modified to Phosphoserine. The chain crosses the membrane as a helical span at residues 580-600 (LFVPLLVGTGVALVTGATVLG). At 601-613 (TITCCFMKRLRKR) the chain is on the cytoplasmic side. 2 S-palmitoyl cysteine lipidation sites follow: C604 and C605.

Interacts directly with CD82, CD81/tetraspanin-28 and CD9/tetraspanin-29. Also interacts with integrin alpha-3/beta-1 and integrin alpha-4/beta-1. Interacts with HSPA8; this interaction modulates migratory and antigen-presenting capacities of dendritic cells. Expressed in brain, kidney, testis, liver and placenta with moderate expression in all other tissues. Detected on a majority of B-cells, T-cells, and natural killer cells. Expressed on dendritic cells.

It localises to the cell membrane. In terms of biological role, member of the immunoglobulin superfamily (IgSF) that links tetraspanin-enriched microdomains to the actin cytoskeleton and plays several important roles in innate and adaptive immunity. Acts as an inducible receptor of HSPA8 on dendritic cells to enhance the CCL21/SLC-dependent migration of activated mature dendritic cells while attenuating their antigen-specific stimulatory capacities. In complex with alpha-actinins ACTN1 and ACTN4, regulates actin dynamics in the immune synapse and subsequent T-cell activation. Inhibits the entry of several viruses such as hepatitis C Virus (HCV) or HIV-1. Mechanistically, promotes a change in CD81 organization at the plasma membrane by significantly restricting its diffusion which in turn influences CD81 interaction with Claudin-1/CLDN1, preventing CLDN1 from acting as a co-receptor required for HCV entry. Accumulates at the presynaptic terminal, the producer cell side of the virological synapse, to prevent HIV-1 Env-mediated cell-cell fusion. Highly expressed on malignant cells with antigen presentation defects, interacts with NK receptor KIR3DL2 to suppress NK-cell cytotoxicity. May participate in the regulation of neurite outgrowth and maintenance of the neural network in the adult brain. This chain is Immunoglobulin superfamily member 8 (IGSF8), found in Homo sapiens (Human).